Consider the following 621-residue polypeptide: Polycystin-2-like protein 2 (621 aa).

Residues 1 to 31 lie on the Cytoplasmic side of the membrane; it reads MSEATWWYRGGTSKHDLHYRREAEVNTTLEE. Residues 32–52 traverse the membrane as a helical segment; it reads LLLYFIFLINLCILTFGMVNP. The Extracellular segment spans residues 53 to 277; sequence HMYYLNKVMS…SVKLLRYVSY (225 aa). N-linked (GlcNAc...) asparagine glycans are attached at residues asparagine 115 and asparagine 138. The chain crosses the membrane as a helical span at residues 278–298; sequence YDYFIASCEVIFCIFLFVFII. Over 299-314 the chain is Cytoplasmic; the sequence is QELRKVNEFKSAYFRS. A helical transmembrane segment spans residues 315-335; sequence VWNWLEMLLLLLCFLAVSFYA. Topologically, residues 336 to 360 are extracellular; it reads YCNMQSFLLLGQLLKNTDSYPDFYF. A helical transmembrane segment spans residues 361–381; it reads LAYWHIYYNNVIAITIFFAWI. The Cytoplasmic portion of the chain corresponds to 382–406; sequence KIFKFISFNETMSQLSSTLSRCMKD. A helical transmembrane segment spans residues 407 to 427; the sequence is IVGFAIMFFIIFSAYAQLGFL. The Extracellular portion of the chain corresponds to 428–468; sequence VFGSQVDDFSTFQNSIFAQFRIVLGDFNFAGIQQANWILGP. A helical membrane pass occupies residues 469 to 489; sequence IYFITFIFFVFFVLLNMFLAI. At 490-621 the chain is on the cytoplasmic side; the sequence is INDTYSEVKA…KLNQLMRKLH (132 aa). The stretch at 521–551 forms a coiled coil; that stretch reads NVLEKLRLKKAQAKEEKKMQTTDLAQRARRD.

This sequence belongs to the polycystin family. In terms of assembly, interacts with TRPC1 and TRPC5. In terms of tissue distribution, expressed only in testis and heart.

It localises to the membrane. Functionally, exhibits a lower single conductance but no spontaneous channel activity. May function as a regulator of calcium channels or a channel component involving Ca2(+) homeostasis. In Mus musculus (Mouse), this protein is Polycystin-2-like protein 2.